The following is a 252-amino-acid chain: Protein PYRAB15930 (252 aa).

It belongs to the CinA family.

The sequence is that of Protein PYRAB15930 from Pyrococcus abyssi (strain GE5 / Orsay).